The chain runs to 247 residues: MSGHSKWSTIKHKKGAADAKRGKIFTKLIKEITVAARMGGGDIDSNPRLRGAVAAAKAQNMPKDNLERAIKKGTGDLEGVDYEEILYEGYGPGGVAILVECLTDNKNRTIADVRYIFSKAGGNIGTDGCVAWMFDKKGLITISKEESDEDTLMEVGLEAGAEDVTDEGDCFEIITDPADFDAVKGAVEAAGIKIEMAEVTMIPQTQTRLEGKEAEQMVRFMDALDDCDDIQKFYSNADIPDEVYDAM.

The protein belongs to the TACO1 family.

It is found in the cytoplasm. This Desulforapulum autotrophicum (strain ATCC 43914 / DSM 3382 / VKM B-1955 / HRM2) (Desulfobacterium autotrophicum) protein is Probable transcriptional regulatory protein HRM2_04000.